Reading from the N-terminus, the 551-residue chain is Glucans biosynthesis protein D (551 aa).

A signal peptide (tat-type signal) is located at residues 1–32; the sequence is MDRRRFIKGSMAMAAVCGTSGIASLFSQAAFA.

Belongs to the OpgD/OpgG family. Predicted to be exported by the Tat system. The position of the signal peptide cleavage has not been experimentally proven.

Its subcellular location is the periplasm. The protein operates within glycan metabolism; osmoregulated periplasmic glucan (OPG) biosynthesis. Probably involved in the control of the structural glucose backbone of osmoregulated periplasmic glucans (OPGs). This Escherichia coli O127:H6 (strain E2348/69 / EPEC) protein is Glucans biosynthesis protein D.